A 256-amino-acid polypeptide reads, in one-letter code: Phosphonates import ATP-binding protein PhnC (256 aa).

Residues 2 to 246 (LKVIQLDKTY…VLQHIYRQPD (245 aa)) enclose the ABC transporter domain. 35 to 42 (GPSGAGKT) provides a ligand contact to ATP.

The protein belongs to the ABC transporter superfamily. Phosphonates importer (TC 3.A.1.9.1) family. The complex is composed of two ATP-binding proteins (PhnC), two transmembrane proteins (PhnE) and a solute-binding protein (PhnD).

The protein resides in the cell membrane. The enzyme catalyses phosphonate(out) + ATP + H2O = phosphonate(in) + ADP + phosphate + H(+). Its function is as follows. Part of the ABC transporter complex PhnCDE involved in phosphonates import. Responsible for energy coupling to the transport system. The sequence is that of Phosphonates import ATP-binding protein PhnC from Lactiplantibacillus plantarum (strain ATCC BAA-793 / NCIMB 8826 / WCFS1) (Lactobacillus plantarum).